The chain runs to 101 residues: Nucleoid-associated protein Bind_0255 (101 aa).

The protein belongs to the YbaB/EbfC family. As to quaternary structure, homodimer.

The protein resides in the cytoplasm. Its subcellular location is the nucleoid. Its function is as follows. Binds to DNA and alters its conformation. May be involved in regulation of gene expression, nucleoid organization and DNA protection. In Beijerinckia indica subsp. indica (strain ATCC 9039 / DSM 1715 / NCIMB 8712), this protein is Nucleoid-associated protein Bind_0255.